Reading from the N-terminus, the 1706-residue chain is Probable ATP-dependent RNA helicase DDX60-like (1706 aa).

The segment at 545 to 580 (RPKEDSSGASGEILQNTKPHQITKKSKKKSFLKEDQ) is disordered. Residues 551 to 564 (SGASGEILQNTKPH) show a composition bias toward polar residues. The segment covering 565–574 (QITKKSKKKS) has biased composition (basic residues). One can recognise a Helicase ATP-binding domain in the interval 752 to 919 (LDVVDKNESA…WLQSVKQYWK (168 aa)). An ATP-binding site is contributed by 765-772 (APTSSGKT). A DEAH box motif is present at residues 869-872 (DEVH). The Helicase C-terminal domain maps to 1205–1354 (DVKALHTEIT…QFPLSITLVL (150 aa)).

Belongs to the helicase family.

The enzyme catalyses ATP + H2O = ADP + phosphate + H(+). This chain is Probable ATP-dependent RNA helicase DDX60-like, found in Homo sapiens (Human).